Here is a 468-residue protein sequence, read N- to C-terminus: Acetyl-CoA decarbonylase/synthase complex subunit gamma (468 aa).

Residues 1–60 (MKINSPLEAYKYLPQTNCGECGEATCMAFASKLIDRSGKTSDCPPLIKEKKFAKKLAELD) enclose the 4Fe-4S domain. [4Fe-4S] cluster is bound by residues cysteine 18, cysteine 21, cysteine 26, and cysteine 43.

In terms of assembly, heterodimer of delta and gamma chains. The ACDS complex is made up of alpha, epsilon, beta, gamma and delta chains with a probable stoichiometry of (alpha(2)epsilon(2))(4)-beta(8)-(gamma(1)delta(1))(8). Requires corrinoid as cofactor. The cofactor is [4Fe-4S] cluster.

The catalysed reaction is 5,6,7,8-tetrahydrosarcinapterin + methyl-Co(III)-[corrinoid Fe-S protein] = 5-methyltetrahydrosarcinapterin + Co(I)-[corrinoid Fe-S protein] + H(+). It functions in the pathway one-carbon metabolism; methanogenesis from acetate. In terms of biological role, part of a complex that catalyzes the reversible cleavage of acetyl-CoA, allowing growth on acetate as sole source of carbon and energy. The protein is Acetyl-CoA decarbonylase/synthase complex subunit gamma of Methanosarcina acetivorans (strain ATCC 35395 / DSM 2834 / JCM 12185 / C2A).